Consider the following 185-residue polypeptide: Nuclear transcription factor Y subunit B-3 (185 aa).

The segment covering 1-36 (MADGPGSPGGGGGSHESGSPRGGGGGGGGGGGGGGV) has biased composition (gly residues). The disordered stretch occupies residues 1–39 (MADGPGSPGGGGGSHESGSPRGGGGGGGGGGGGGGVREQ). A DNA-binding region spans residues 43–49 (LPIANIS). A subunit association domain (SAD) region spans residues 70 to 81 (VQECVSEFISFI). Residues 145–164 (KDVLGSHGGSSSSAQGMGQQ) are disordered. Residues 153–164 (GSSSSAQGMGQQ) show a composition bias toward low complexity.

It belongs to the NFYB/HAP3 subunit family. In terms of assembly, heterotrimeric transcription factor composed of three components, NF-YA, NF-YB and NF-YC. NF-YB and NF-YC must interact and dimerize for NF-YA association and DNA binding. Ubiquitous.

The protein resides in the nucleus. Its function is as follows. Component of the NF-Y/HAP transcription factor complex. The NF-Y complex stimulates the transcription of various genes by recognizing and binding to a CCAAT motif in promoters. May regulate the expression of photosynthetic genes, and may be involved in chloroplast and amyloplast development. The protein is Nuclear transcription factor Y subunit B-3 (NFYB3) of Oryza sativa subsp. japonica (Rice).